Reading from the N-terminus, the 612-residue chain is Glutamine--fructose-6-phosphate aminotransferase [isomerizing] (612 aa).

Cys-2 functions as the Nucleophile; for GATase activity in the catalytic mechanism. In terms of domain architecture, Glutamine amidotransferase type-2 spans 2 to 220 (CGIVGAIRAH…DGDIALLASD (219 aa)). 2 consecutive SIS domains span residues 288-428 (AKSV…VRGL) and 461-602 (WAQQ…VDKP). Lys-607 serves as the catalytic For Fru-6P isomerization activity.

Homodimer.

Its subcellular location is the cytoplasm. The catalysed reaction is D-fructose 6-phosphate + L-glutamine = D-glucosamine 6-phosphate + L-glutamate. Catalyzes the first step in hexosamine metabolism, converting fructose-6P into glucosamine-6P using glutamine as a nitrogen source. The polypeptide is Glutamine--fructose-6-phosphate aminotransferase [isomerizing] (Neisseria meningitidis serogroup A / serotype 4A (strain DSM 15465 / Z2491)).